The sequence spans 145 residues: MLLPKRVKHRRQFRGSMAGKATRGNKITNGEFGIVATEPCWIKSNQIEAARVAMTRYIKRGGKVFIKIFPDKPVTGKPIGVRMGKGKGNLECWVAVVKPGRVMFEISGVAEETAREALRLATHKLPCKCKIVSRADLEGGDNSEN.

Belongs to the universal ribosomal protein uL16 family. As to quaternary structure, part of the 50S ribosomal subunit.

Binds 23S rRNA and is also seen to make contacts with the A and possibly P site tRNAs. This Lachnospira eligens (strain ATCC 27750 / DSM 3376 / VPI C15-48 / C15-B4) (Eubacterium eligens) protein is Large ribosomal subunit protein uL16.